We begin with the raw amino-acid sequence, 367 residues long: Large ribosomal subunit protein mL38 (367 aa).

Residues 1–29 (MLRRSIHTTKILQKPNATSHIWSDFTTRP) constitute a mitochondrion transit peptide.

The protein belongs to the phosphatidylethanolamine-binding protein family. Mitochondrion-specific ribosomal protein mL38 subfamily. As to quaternary structure, component of the mitochondrial large ribosomal subunit (mt-LSU). Mature yeast 74S mitochondrial ribosomes consist of a small (37S) and a large (54S) subunit. The 37S small subunit contains a 15S ribosomal RNA (15S mt-rRNA) and 34 different proteins. The 54S large subunit contains a 21S rRNA (21S mt-rRNA) and 46 different proteins.

The protein resides in the mitochondrion. Functionally, component of the mitochondrial ribosome (mitoribosome), a dedicated translation machinery responsible for the synthesis of mitochondrial genome-encoded proteins, including at least some of the essential transmembrane subunits of the mitochondrial respiratory chain. The mitoribosomes are attached to the mitochondrial inner membrane and translation products are cotranslationally integrated into the membrane. This Saccharomyces cerevisiae (strain ATCC 204508 / S288c) (Baker's yeast) protein is Large ribosomal subunit protein mL38 (MRPL35).